The chain runs to 880 residues: Alanine--tRNA ligase (880 aa).

It belongs to the class-II aminoacyl-tRNA synthetase family.

The protein resides in the cytoplasm. The catalysed reaction is tRNA(Ala) + L-alanine + ATP = L-alanyl-tRNA(Ala) + AMP + diphosphate. In terms of biological role, catalyzes the attachment of alanine to tRNA(Ala) in a two-step reaction: alanine is first activated by ATP to form Ala-AMP and then transferred to the acceptor end of tRNA(Ala). Also edits incorrectly charged Ser-tRNA(Ala) and Gly-tRNA(Ala) via its editing domain. The sequence is that of Alanine--tRNA ligase (alaS) from Lactiplantibacillus plantarum (strain ATCC BAA-793 / NCIMB 8826 / WCFS1) (Lactobacillus plantarum).